The primary structure comprises 205 residues: Large ribosomal subunit protein uL4 (205 aa).

The disordered stretch occupies residues arginine 44–serine 79.

The protein belongs to the universal ribosomal protein uL4 family. Part of the 50S ribosomal subunit.

In terms of biological role, one of the primary rRNA binding proteins, this protein initially binds near the 5'-end of the 23S rRNA. It is important during the early stages of 50S assembly. It makes multiple contacts with different domains of the 23S rRNA in the assembled 50S subunit and ribosome. Functionally, forms part of the polypeptide exit tunnel. This chain is Large ribosomal subunit protein uL4, found in Coxiella burnetii (strain RSA 331 / Henzerling II).